The sequence spans 178 residues: MSDDIFRLATVEDASELLKLVNSAFQPIRQLDIDWPSTRADIQMVSENIEHHSAIVLERDGKLISTITIRFPWESETPPSKYPFVWWFATLPEYKGQGAGSKLLTYVEEKVLRDMLKAPALTLGTSARKHPWLADMYRRRGYEVYFEQEKDGDIGVMMHKVLIPERFNPTLLGAPSWA.

Residues 4–163 enclose the N-acetyltransferase domain; that stretch reads DIFRLATVED…IGVMMHKVLI (160 aa).

This sequence belongs to the acetyltransferase family.

The enzyme catalyses an S-substituted L-cysteine + acetyl-CoA = an N-acetyl-L-cysteine-S-conjugate + CoA + H(+). The catalysed reaction is S-benzyl-L-cysteine + acetyl-CoA = N-acetyl-S-benzyl-L-cysteine + CoA + H(+). It catalyses the reaction S-methyl-L-cysteine + acetyl-CoA = N-acetyl-S-methyl-L-cysteine + CoA + H(+). It participates in amino-acid metabolism. Involved in a cysteine salvage pathway from S-alkylcysteine. Catalyzes the first step in this pathway, i.e. the amine acetylation of an S-alkylcysteine with a preference for S-benzyl-L-cysteine over S-methyl-L-cysteine. This pathway is likely important in the catabolism of alkylated cysteine generated by proteolysis of alkylated glutathione formed in the detoxification of a wide range of electrophiles. The polypeptide is S-alkylcysteine N-acetyltransferase (Bacillus subtilis (strain 168)).